A 419-amino-acid polypeptide reads, in one-letter code: UDP-N-acetylglucosamine 1-carboxyvinyltransferase 2 (419 aa).

22–23 (KN) lines the phosphoenolpyruvate pocket. Residue Arg-92 coordinates UDP-N-acetyl-alpha-D-glucosamine. Catalysis depends on Cys-116, which acts as the Proton donor. Cys-116 is modified (2-(S-cysteinyl)pyruvic acid O-phosphothioketal). Residues 121–125 (RPIDL), Asp-306, and Ile-328 contribute to the UDP-N-acetyl-alpha-D-glucosamine site.

Belongs to the EPSP synthase family. MurA subfamily.

Its subcellular location is the cytoplasm. The catalysed reaction is phosphoenolpyruvate + UDP-N-acetyl-alpha-D-glucosamine = UDP-N-acetyl-3-O-(1-carboxyvinyl)-alpha-D-glucosamine + phosphate. It participates in cell wall biogenesis; peptidoglycan biosynthesis. Functionally, cell wall formation. Adds enolpyruvyl to UDP-N-acetylglucosamine. This Streptococcus pyogenes serotype M1 protein is UDP-N-acetylglucosamine 1-carboxyvinyltransferase 2.